Here is a 556-residue protein sequence, read N- to C-terminus: Acetyl-coenzyme A thioesterase (556 aa).

One can recognise a HotDog ACOT-type 1 domain in the interval 6–118 (APGEVLMSQA…FSTFVAKPVG (113 aa)). Lysine 34 carries the post-translational modification N6-succinyllysine. Residues 54–56 (TAS) and 83–85 (STS) each bind CoA. The residue at position 97 (lysine 97) is an N6-succinyllysine. Arginine 145 serves as a coordination point for CoA. N6-succinyllysine occurs at positions 160 and 229. Residues 180–295 (MGTSVQSIEL…FLIYNAVDDQ (116 aa)) form the HotDog ACOT-type 2 domain. 235-237 (KFR) contributes to the CoA binding site. The START domain occupies 327–536 (GRKYVISHKK…GGWSKSIEEA (210 aa)).

Homodimer or homotetramer.

It is found in the cytoplasm. Its subcellular location is the cytosol. The enzyme catalyses acetyl-CoA + H2O = acetate + CoA + H(+). It carries out the reaction butanoyl-CoA + H2O = butanoate + CoA + H(+). The catalysed reaction is hexanoyl-CoA + H2O = hexanoate + CoA + H(+). Its pathway is lipid metabolism; fatty acid metabolism. Allosterically regulated by ATP (activator) and ADP (inhibitor). Cold labile, it dissociates into inactive monomers at low temperature. Catalyzes the hydrolysis of acyl-CoAs into free fatty acids and coenzyme A (CoASH), regulating their respective intracellular levels. Preferentially hydrolyzes acetyl-CoA. In Mus musculus (Mouse), this protein is Acetyl-coenzyme A thioesterase (Acot12).